The sequence spans 241 residues: 2-C-methyl-D-erythritol 4-phosphate cytidylyltransferase (241 aa).

This sequence belongs to the IspD/TarI cytidylyltransferase family. IspD subfamily.

The catalysed reaction is 2-C-methyl-D-erythritol 4-phosphate + CTP + H(+) = 4-CDP-2-C-methyl-D-erythritol + diphosphate. It functions in the pathway isoprenoid biosynthesis; isopentenyl diphosphate biosynthesis via DXP pathway; isopentenyl diphosphate from 1-deoxy-D-xylulose 5-phosphate: step 2/6. In terms of biological role, catalyzes the formation of 4-diphosphocytidyl-2-C-methyl-D-erythritol from CTP and 2-C-methyl-D-erythritol 4-phosphate (MEP). The sequence is that of 2-C-methyl-D-erythritol 4-phosphate cytidylyltransferase from Shewanella denitrificans (strain OS217 / ATCC BAA-1090 / DSM 15013).